Reading from the N-terminus, the 102-residue chain is MDKVMRMSSEKGVVIFTKSSCCLCYAVQILFRDLRVQPTIHEIDNDPDCREIEKALLRLGCSTAVPAVFVGGKLVGSTNEVMSLHLSGSLVPLIKPYQSILY.

The region spanning Met1 to Leu101 is the Glutaredoxin domain. Cysteines 21 and 24 form a disulfide.

The protein belongs to the glutaredoxin family. CC-type subfamily.

It localises to the cytoplasm. In terms of biological role, has a glutathione-disulfide oxidoreductase activity in the presence of NADPH and glutathione reductase. Reduces low molecular weight disulfides and proteins. In Arabidopsis thaliana (Mouse-ear cress), this protein is Glutaredoxin-C13 (GRXC13).